We begin with the raw amino-acid sequence, 432 residues long: Phosphomethylpyrimidine synthase (432 aa).

Residues Asn66, Met95, Tyr124, His163, 185–187, 226–229, and Glu265 contribute to the substrate site; these read SRG and DGMR. Residue His269 coordinates Zn(2+). Tyr292 lines the substrate pocket. His333 provides a ligand contact to Zn(2+). The [4Fe-4S] cluster site is built by Cys409, Cys412, and Cys416.

The protein belongs to the ThiC family. Requires [4Fe-4S] cluster as cofactor.

It carries out the reaction 5-amino-1-(5-phospho-beta-D-ribosyl)imidazole + S-adenosyl-L-methionine = 4-amino-2-methyl-5-(phosphooxymethyl)pyrimidine + CO + 5'-deoxyadenosine + formate + L-methionine + 3 H(+). The protein operates within cofactor biosynthesis; thiamine diphosphate biosynthesis. Catalyzes the synthesis of the hydroxymethylpyrimidine phosphate (HMP-P) moiety of thiamine from aminoimidazole ribotide (AIR) in a radical S-adenosyl-L-methionine (SAM)-dependent reaction. The protein is Phosphomethylpyrimidine synthase of Desulforudis audaxviator (strain MP104C).